The following is a 318-amino-acid chain: Dehydrogenase/reductase SDR family member 7C-B (318 aa).

A signal peptide spans 1 to 32; that stretch reads MGMSDIMWLDVSWAWLVLTAVLLAAAVFYLYT. 49 to 73 contacts NAD(+); that stretch reads LITDSLSTVGNECAKLFHAGGARLI. A substrate-binding site is contributed by Ser-186. Catalysis depends on Tyr-199, which acts as the Proton acceptor.

This sequence belongs to the short-chain dehydrogenases/reductases (SDR) family.

It localises to the secreted. In terms of biological role, putative oxidoreductase. The sequence is that of Dehydrogenase/reductase SDR family member 7C-B (dhrs7cb) from Danio rerio (Zebrafish).